Consider the following 305-residue polypeptide: MKLVFMGTPDFSVPILDSLIEAGHQVICVYSQPPRPAGRGHKEQLTPVHAFAHERGIPVRTPKSLKPAEAQAEFAALEADVAVVAAYGLILPQAVLDAPRLGCLNVHASLLPRWRGAAPIQRAILAGDAETGITIMQMDAGLDTGAMLSRESILLAPDTTAPWLHDMLAAMGARMIVETLARLEDDEPPAATPQPAEGVTYAHKLAKEEGLLDWRRNAVELDRKVRALNPWPGVWFEMAGERIKVLEAAVTPGSGAPGTVLDDQLTIACGKFALRPLKVQRAGKAPMTASEMLRGHAIPKGTVLG.

A (6S)-5,6,7,8-tetrahydrofolate-binding site is contributed by 109–112 (SLLP).

Belongs to the Fmt family.

It catalyses the reaction L-methionyl-tRNA(fMet) + (6R)-10-formyltetrahydrofolate = N-formyl-L-methionyl-tRNA(fMet) + (6S)-5,6,7,8-tetrahydrofolate + H(+). In terms of biological role, attaches a formyl group to the free amino group of methionyl-tRNA(fMet). The formyl group appears to play a dual role in the initiator identity of N-formylmethionyl-tRNA by promoting its recognition by IF2 and preventing the misappropriation of this tRNA by the elongation apparatus. In Paramagnetospirillum magneticum (strain ATCC 700264 / AMB-1) (Magnetospirillum magneticum), this protein is Methionyl-tRNA formyltransferase.